A 782-amino-acid chain; its full sequence is Cleavage and polyadenylation specificity factor subunit 2 (782 aa).

Basic and acidic residues predominate over residues 407–416 (KKLEQSKEAD). Residues 407–452 (KKLEQSKEADIDSSDESDAEEDIDQPSAHKTKHDLMMKGEGSRKGS) form a disordered region. Acidic residues predominate over residues 417 to 430 (IDSSDESDAEEDID). Phosphoserine occurs at positions 419, 420, and 423. Residues 439-449 (HDLMMKGEGSR) show a composition bias toward basic and acidic residues. S660 is subject to Phosphoserine.

This sequence belongs to the metallo-beta-lactamase superfamily. RNA-metabolizing metallo-beta-lactamase-like family. CPSF2/YSH1 subfamily. Component of the cleavage and polyadenylation specificity factor (CPSF) complex, composed of CPSF1, CPSF2, CPSF3, CPSF4 and FIP1L1. Interacts with CPSF3, CSTF2 and SYMPK. Interacts with ZC3H3.

The protein localises to the nucleus. In terms of biological role, component of the cleavage and polyadenylation specificity factor (CPSF) complex that play a key role in pre-mRNA 3'-end formation, recognizing the AAUAAA signal sequence and interacting with poly(A) polymerase and other factors to bring about cleavage and poly(A) addition. Involved in the histone 3' end pre-mRNA processing. This chain is Cleavage and polyadenylation specificity factor subunit 2 (CPSF2), found in Bos taurus (Bovine).